The chain runs to 562 residues: Terpene synthase 2 (562 aa).

Mg(2+) contacts are provided by aspartate 315, aspartate 319, aspartate 459, and glutamate 467. Positions 315-319 (DDEYD) match the DDXXD motif motif.

The protein belongs to the terpene synthase family. Tpsa subfamily. The cofactor is Mg(2+). Requires Mn(2+) as cofactor. In terms of tissue distribution, expressed at low levels in stems, leaves, roots and fruits.

It carries out the reaction (2E,6E)-farnesyl diphosphate = delta-cadinene + diphosphate. The enzyme catalyses (2E,6E)-farnesyl diphosphate = alpha-cadinene + diphosphate. The catalysed reaction is (2E,6E)-farnesyl diphosphate + H2O = (-)-delta-cadinol + diphosphate. It participates in secondary metabolite biosynthesis; terpenoid biosynthesis. Functionally, sesquiterpene synthase involved in the biosynthesis of volatile compounds that contribute to the characteristic flavors of black pepper. Mediates the conversion of (2E,6E)-farnesyl diphosphate (FPP) into alpha-cadinene, delta-cadinene and delta-cadinol. The polypeptide is Terpene synthase 2 (Piper nigrum (Black pepper)).